Here is a 429-residue protein sequence, read N- to C-terminus: SET domain-containing protein 8 (429 aa).

The region spanning 17–232 (KQITIKKIRK…ENEEVTINYG (216 aa)) is the SET domain.

This sequence belongs to the class V-like SAM-binding methyltransferase superfamily.

It is found in the cytoplasm. It localises to the nucleus. The polypeptide is SET domain-containing protein 8 (set8) (Schizosaccharomyces pombe (strain 972 / ATCC 24843) (Fission yeast)).